The chain runs to 351 residues: Replication protein RepA (351 aa).

The interval 295-315 (ALPPTKAAPEEPEDILPGDDQ) is disordered. The segment covering 304–315 (EEPEDILPGDDQ) has biased composition (acidic residues).

This sequence belongs to the initiator RepB protein family.

In terms of biological role, this protein is essential for plasmid replication; it is involved in copy control functions. In Salmonella typhi, this protein is Replication protein RepA (repA).